A 326-amino-acid chain; its full sequence is MQTALLKPKIIAVEPLGDHHAKVVMEPFERGYGHTLGNALRRVLLSSMVGYAPTEVTIAGVVHEYSTIDGVQEDVVNLLLNLKGVVFKLHNRDEVTVSLRKEGEGVVTAADIELPHDVEIINPGHVIASLSAGGKLDMQIKVEQGRGYVPGNVRKFGDESSKVIGRIVLDASFAPVRRVSYAVESARVEQRTDLDKLVMNIETNGVISPEEAIRQSARILVDQLSVFAALEGTESAAEAAAARAPQIDPILLRPVDDLELTVRSANCLKAENIYYIGDLIQRTENELLKTPNLGRKSLNEIKEVLASRGLTLGMKLENWPPAGLEK.

The interval methionine 1 to glutamate 231 is alpha N-terminal domain (alpha-NTD). Residues isoleucine 247–lysine 326 form an alpha C-terminal domain (alpha-CTD) region.

The protein belongs to the RNA polymerase alpha chain family. As to quaternary structure, homodimer. The RNAP catalytic core consists of 2 alpha, 1 beta, 1 beta' and 1 omega subunit. When a sigma factor is associated with the core the holoenzyme is formed, which can initiate transcription.

It carries out the reaction RNA(n) + a ribonucleoside 5'-triphosphate = RNA(n+1) + diphosphate. Its function is as follows. DNA-dependent RNA polymerase catalyzes the transcription of DNA into RNA using the four ribonucleoside triphosphates as substrates. The protein is DNA-directed RNA polymerase subunit alpha of Ralstonia nicotianae (strain ATCC BAA-1114 / GMI1000) (Ralstonia solanacearum).